The chain runs to 183 residues: Ferritin heavy chain (183 aa).

M1 carries the post-translational modification N-acetylmethionine. T2 is modified (N-acetylthreonine; in Ferritin heavy chain, N-terminally processed). In terms of domain architecture, Ferritin-like diiron spans 11–160 (QNYHQDSEAA…DHVTNLRKMG (150 aa)). Fe cation-binding residues include E28, E63, H66, E108, and Q142. Phosphoserine is present on residues S179 and S183.

It belongs to the ferritin family. In terms of assembly, oligomer of 24 subunits. There are two types of subunits: L (light) chain and H (heavy) chain. The major chain can be light or heavy, depending on the species and tissue type. The functional molecule forms a roughly spherical shell with a diameter of 12 nm and contains a central cavity into which the insoluble mineral iron core is deposited. Interacts with NCOA4; NCOA4 promotes targeting of the iron-binding ferritin complex to autolysosomes following starvation or iron depletion. In terms of tissue distribution, ubiquitous.

The protein localises to the cytoplasm. Its subcellular location is the lysosome. It is found in the cytoplasmic vesicle. It localises to the autophagosome. The catalysed reaction is 4 Fe(2+) + O2 + 4 H(+) = 4 Fe(3+) + 2 H2O. Its function is as follows. Stores iron in a soluble, non-toxic, readily available form. Important for iron homeostasis. Has ferroxidase activity. Iron is taken up in the ferrous form and deposited as ferric hydroxides after oxidation. Also plays a role in delivery of iron to cells. Mediates iron uptake in capsule cells of the developing kidney. Delivery to lysosomes is mediated by the cargo receptor NCOA4 for autophagic degradation and release of iron. This is Ferritin heavy chain (FTH1) from Trichosurus vulpecula (Brush-tailed possum).